Reading from the N-terminus, the 548-residue chain is Membrane protein insertase YidC (548 aa).

A helical transmembrane segment spans residues 6–26 (NLLVIALLFVSFMIWQAWEQD). Residues 28–56 (NPQPQTQQTTQTTTTAAGSAADQGVPASG) are disordered. A compositionally biased stretch (low complexity) spans 29-42 (PQPQTQQTTQTTTT). 4 helical membrane passes run 350 to 370 (FVGN…GIMY), 424 to 444 (FPLI…MGSI), 458 to 478 (LSAQ…MFFI), and 499 to 519 (PVIF…YYIV).

This sequence belongs to the OXA1/ALB3/YidC family. Type 1 subfamily. In terms of assembly, interacts with the Sec translocase complex via SecD. Specifically interacts with transmembrane segments of nascent integral membrane proteins during membrane integration.

Its subcellular location is the cell inner membrane. Its function is as follows. Required for the insertion and/or proper folding and/or complex formation of integral membrane proteins into the membrane. Involved in integration of membrane proteins that insert both dependently and independently of the Sec translocase complex, as well as at least some lipoproteins. Aids folding of multispanning membrane proteins. The polypeptide is Membrane protein insertase YidC (Salmonella heidelberg (strain SL476)).